The primary structure comprises 993 residues: DNA-binding protein SMUBP-2 (993 aa).

An N-acetylalanine modification is found at Ala-2. ATP contacts are provided by residues 213 to 220 (GPPGTGKT), Gln-402, Tyr-441, and Glu-570. Positions 637–783 (TAFEYLDDIV…KARHITVSRR (147 aa)) are SS DNA-binding. Disordered regions lie at residues 650–723 (YTHE…GPDR), 765–815 (LRHD…EPVT), and 837–872 (RQQSSQAQTAKGQPGGDSRPQKASQKKKKKEPKGPV). 2 stretches are compositionally biased toward polar residues: residues 667–683 (PSTSIRKPASDQESGQE) and 703–716 (HVQSQHSSSANGSD). Positions 721-784 (PDRTEHFRAT…ARHITVSRRS (64 aa)) constitute an R3H domain. The span at 765-775 (LRHDSTGEGKA) shows a compositional bias: basic and acidic residues. Low complexity predominate over residues 784-794 (SPASSGSVAPQ). A phosphoserine mark is found at Ser-797 and Ser-800. Residues 837–847 (RQQSSQAQTAK) show a composition bias toward polar residues. A Nuclear localization signal motif is present at residues 862 to 866 (KKKKK). The AN1-type; degenerate zinc finger occupies 889–938 (VKADNTCSFSKCSVSTTTLGQFCMHCSHRYYLSHHLPEIHGCGEKARAHA). The Zn(2+) site is built by Cys-911, Cys-914, His-928, and Cys-930. The segment at 953–993 (GTKDRALDPAKRAQLQRRLDKKLGELSSQRTSRKKEKERGT) is disordered. A compositionally biased stretch (basic and acidic residues) spans 954-976 (TKDRALDPAKRAQLQRRLDKKLG).

The protein belongs to the DNA2/NAM7 helicase family. In terms of assembly, homooligomer. Interacts with RUVBL1. Interacts with RUVBL2. Interacts with GTF3C1. Interacts with ABT1. Interacts with ribosomes. As to expression, in all tissues examined.

It is found in the nucleus. The protein resides in the cytoplasm. It localises to the cell projection. Its subcellular location is the axon. The catalysed reaction is ATP + H2O = ADP + phosphate + H(+). Functionally, 5' to 3' helicase that unwinds RNA and DNA duplexes in an ATP-dependent reaction. Specific to 5'-phosphorylated single-stranded guanine-rich sequences. May play a role in RNA metabolism, ribosome biogenesis or initiation of translation. May play a role in regulation of transcription. Interacts with tRNA-Tyr. This is DNA-binding protein SMUBP-2 (Ighmbp2) from Mus musculus (Mouse).